The sequence spans 295 residues: Ribosomal protein L11 methyltransferase (295 aa).

Positions 138, 161, 183, and 230 each coordinate S-adenosyl-L-methionine.

This sequence belongs to the methyltransferase superfamily. PrmA family.

The protein resides in the cytoplasm. It catalyses the reaction L-lysyl-[protein] + 3 S-adenosyl-L-methionine = N(6),N(6),N(6)-trimethyl-L-lysyl-[protein] + 3 S-adenosyl-L-homocysteine + 3 H(+). Methylates ribosomal protein L11. The chain is Ribosomal protein L11 methyltransferase from Rhodopseudomonas palustris (strain BisB5).